A 359-amino-acid chain; its full sequence is MSKEKALESALSQIEKQFGKGAIMRLGDQEAAHDIDVIPSGIIALDVALGIGGYPKGRIIEIYGHESSGKTTLTLLAIAQCQKQGGTAAFVDAEHALDPKYAKLLGVDVDNLIVSQPDTGEQALEIADMLVRSGGVDIVVIDSVAALTPKAEIEGDMGDSHMGLQARLMSQALRKLTANIKRSNTLVIFINQIRMKIGVMFGNPETTTGGNALKFYSSVRLEVKKGGSIKDGIDVSGNEIKVKVVKNKVAPPFKQADFELIYGEGISLEAELIDLGAKYNIIEKSGAWYSYKGKKIGQGKEKSKEYLKENTAERDEIERAILELLLPNKYPNKDSNDSPKEGSKIKTKVNPAVTQDELI.

Position 64-71 (64-71 (GHESSGKT)) interacts with ATP. Positions 328–359 (NKYPNKDSNDSPKEGSKIKTKVNPAVTQDELI) are disordered. Basic and acidic residues predominate over residues 331-344 (PNKDSNDSPKEGSK).

The protein belongs to the RecA family.

It is found in the cytoplasm. Can catalyze the hydrolysis of ATP in the presence of single-stranded DNA, the ATP-dependent uptake of single-stranded DNA by duplex DNA, and the ATP-dependent hybridization of homologous single-stranded DNAs. It interacts with LexA causing its activation and leading to its autocatalytic cleavage. This Francisella tularensis subsp. novicida (strain U112) protein is Protein RecA.